The sequence spans 511 residues: mRNA export factor (511 aa).

The segment covering 1-15 (MATDIDMLIDLGLDL) has biased composition (low complexity). A disordered region spans residues 1–244 (MATDIDMLID…ERKAPAADTI (244 aa)). A Nuclear export signal motif is present at residues 5–17 (IDMLIDLGLDLSD). S16 and S18 each carry phosphoserine; by host. 2 stretches are compositionally biased toward acidic residues: residues 16 to 26 (SDSDLDEDPPE) and 35 to 51 (LESD…EDME). The interaction with host ALYREF stretch occupies residues 104–112 (VWSRLGARR). The Nuclear localization signal signature appears at 110 to 138 (ARRPSCSPEQHGGKVARLQPPPTKAQPAR). A Phosphoserine; by host modification is found at S114. At R138 the chain carries Dimethylated arginine; by host. The tract at residues 138–152 (RGGRRGRRRGRGRGG) is RGG-box. The span at 139–149 (GGRRGRRRGRG) shows a compositional bias: basic residues. At R148 the chain carries Omega-N-methylarginine; by host. A Dimethylated arginine; by host modification is found at R150. Pro residues predominate over residues 213-232 (APPPLMTLAIAPPPADPRAP). 4 residues coordinate Zn(2+): C399, H478, C482, and C487. The segment at 399-487 (CYLKARGLCG…HRQECSSRVC (89 aa)) adopts a CHC2-type zinc-finger fold.

The protein belongs to the HHV-1 ICP27 protein family. In terms of assembly, interacts with host RBP1; this interaction facilitates the RNA polymerase recruitment to viral transcription sites. Interacts (via the RGG box) with host ALYREF/THOC4; this interaction recruits ALYREF to viral replication compartments and probably directs viral mRNA to the TAP/NFX1 pathway. Interacts (via the RGG box) with host SRPK1; this interaction relocalizes SRPK1 to the nucleus and seems to alter its activity. Interacts with ICP4; this interaction modulates ICP4 DNA-binding activity. Interacts with host NXF1; this interaction allows efficient export of HSV-1 early and late transcripts. Post-translationally, methylated within the RGG box possibly by host PRMT1. When hypomethylated, ICP27 is exported to the cytoplasm earlier and more rapidly. Phosphorylated.

Its subcellular location is the host cytoplasm. It is found in the host nucleus. In terms of biological role, multifunctional regulator of the expression of viral genes that contributes to the shutoff of host protein synthesis and mediates nuclear export of viral intronless mRNAs. Early in infection, this immediate early (EI) protein mediates the inhibition of cellular splicing. This results in the accumulation of unprocessed 3'end pre-mRNAs which can't be exported from the nucleus. Cellular protein synthesis is thereby shut off early after virus infection. Later in the infection, it helps recruit cellular RNA polymerase II to viral replication sites and promotes the nuclear export of viral intronless mRNAs by interacting with mRNAs and host NXF1/TAP. ICP27 binds to NUP62 which may provide facilitated viral mRNA export and may compete with some host cell transport receptors for binding and inhibit cellular nucleocytoplasmic transport pathways. Also stimulates translation of viral transcripts. Repression of host gene expression blocks the cell cycle at the G1 phase and prevents apoptosis. Seems to silence the 3' splice site of the promyelocytic leukemia (PML) intron 7a, thereby switching PML isoforms from PML-II to PML-V. This could be linked to the accelerated mRNA export induced by ICP27 which might not provide sufficient time for PML pre-mRNA to be spliced in the nucleus. The sequence is that of mRNA export factor from Human herpesvirus 1 (strain HFEM) (HHV-1).